Consider the following 478-residue polypeptide: MNSAVEQQLAELGIEAYLKEHQYKSLLRFLTCGSVDDGKSTLIGRLLHDSKQIYADQLDAVHADSQRVGTTGERPDLALLVDGLQAEREQGITIDVAYRYFSTQKRKFIIADTPGHEQYTRNMATGASTCNVAVILIDARKGVLDQTRRHSYIANLLGIRHFVVAVNKMDLVEYSQSRFEEIKEEYLAFSKKLNNPNLDISILPLSALEGDNVVNPSDALSWYQGEPLLEVLENVDIDADKGNGEFRFPVQYVNRPNLDFRGFAGTVSSGGISVGDEIVALPSGKKSKVARIVTFDGDLTSAQAGQAVTLTLEDEIDISRGDLLVKSQSNLQATDQFKAEIVWMTEKGLEPGRQYDIKIAGKKTVGQIDAIHHQVNINSLEKFDTQELPLNGIGLCDVSLTETVSLDRYQDCADTGGFIFIDRLTNVTVGAGMIQNLSDLSESKPINDNISAFEIELNALIRKHFPHWETKDISKLLG.

The tr-type G domain occupies 24 to 240 (KSLLRFLTCG…VLENVDIDAD (217 aa)). Residues 33-40 (GSVDDGKS) are G1. 33–40 (GSVDDGKS) is a GTP binding site. The interval 91 to 95 (GITID) is G2. Residues 112 to 115 (DTPG) form a G3 region. Residues 112–116 (DTPGH) and 167–170 (NKMD) contribute to the GTP site. The segment at 167–170 (NKMD) is G4. The segment at 206 to 208 (SAL) is G5.

This sequence belongs to the TRAFAC class translation factor GTPase superfamily. Classic translation factor GTPase family. CysN/NodQ subfamily. As to quaternary structure, heterodimer composed of CysD, the smaller subunit, and CysN.

The catalysed reaction is sulfate + ATP + H(+) = adenosine 5'-phosphosulfate + diphosphate. Its pathway is sulfur metabolism; hydrogen sulfide biosynthesis; sulfite from sulfate: step 1/3. In terms of biological role, with CysD forms the ATP sulfurylase (ATPS) that catalyzes the adenylation of sulfate producing adenosine 5'-phosphosulfate (APS) and diphosphate, the first enzymatic step in sulfur assimilation pathway. APS synthesis involves the formation of a high-energy phosphoric-sulfuric acid anhydride bond driven by GTP hydrolysis by CysN coupled to ATP hydrolysis by CysD. The protein is Sulfate adenylyltransferase subunit 1 of Aliivibrio fischeri (strain ATCC 700601 / ES114) (Vibrio fischeri).